The sequence spans 185 residues: dTDP-4-dehydrorhamnose 3,5-epimerase (185 aa).

Substrate contacts are provided by residues Arg26, Glu31, 49 to 51 (QDN), and Arg61. His64 serves as the catalytic Proton acceptor. Lys73 and His120 together coordinate substrate. Tyr133 serves as the catalytic Proton donor. Positions 144 and 171 each coordinate substrate.

This sequence belongs to the dTDP-4-dehydrorhamnose 3,5-epimerase family. As to quaternary structure, homodimer.

The catalysed reaction is dTDP-4-dehydro-6-deoxy-alpha-D-glucose = dTDP-4-dehydro-beta-L-rhamnose. The protein operates within carbohydrate biosynthesis; dTDP-L-rhamnose biosynthesis. Functionally, catalyzes the epimerization of the C3' and C5'positions of dTDP-6-deoxy-D-xylo-4-hexulose, forming dTDP-6-deoxy-L-lyxo-4-hexulose. This chain is dTDP-4-dehydrorhamnose 3,5-epimerase (rmlC), found in Methanothermobacter thermautotrophicus (strain ATCC 29096 / DSM 1053 / JCM 10044 / NBRC 100330 / Delta H) (Methanobacterium thermoautotrophicum).